The chain runs to 156 residues: Cyanate hydratase (156 aa).

Residues R96, E99, and S122 contribute to the active site.

It belongs to the cyanase family.

The catalysed reaction is cyanate + hydrogencarbonate + 3 H(+) = NH4(+) + 2 CO2. In terms of biological role, catalyzes the reaction of cyanate with bicarbonate to produce ammonia and carbon dioxide. This Burkholderia ambifaria (strain MC40-6) protein is Cyanate hydratase.